A 353-amino-acid polypeptide reads, in one-letter code: sn-glycerol-3-phosphate import ATP-binding protein UgpC 3 (353 aa).

Residues 4–235 form the ABC transporter domain; that stretch reads IALKDVRKVY…PATTFVATFI (232 aa). ATP is bound at residue 37–44; sequence GPSGCGKS.

Belongs to the ABC transporter superfamily. sn-glycerol-3-phosphate importer (TC 3.A.1.1.3) family. The complex is composed of two ATP-binding proteins (UgpC), two transmembrane proteins (UgpA and UgpE) and a solute-binding protein (UgpB).

The protein localises to the cell inner membrane. It catalyses the reaction sn-glycerol 3-phosphate(out) + ATP + H2O = sn-glycerol 3-phosphate(in) + ADP + phosphate + H(+). Functionally, part of the ABC transporter complex UgpBAEC involved in sn-glycerol-3-phosphate (G3P) import. Responsible for energy coupling to the transport system. The polypeptide is sn-glycerol-3-phosphate import ATP-binding protein UgpC 3 (Agrobacterium fabrum (strain C58 / ATCC 33970) (Agrobacterium tumefaciens (strain C58))).